The chain runs to 279 residues: Large ribosomal subunit protein uL2 (279 aa).

The disordered stretch occupies residues 222–279 (GVAMNPVDHPHGGGEGRTSGGRHPVTPAGKPTKGAKTRVNKATDKFIIRSRHKAKKGR). Basic residues predominate over residues 269 to 279 (IRSRHKAKKGR).

It belongs to the universal ribosomal protein uL2 family. In terms of assembly, part of the 50S ribosomal subunit. Forms a bridge to the 30S subunit in the 70S ribosome.

In terms of biological role, one of the primary rRNA binding proteins. Required for association of the 30S and 50S subunits to form the 70S ribosome, for tRNA binding and peptide bond formation. It has been suggested to have peptidyltransferase activity; this is somewhat controversial. Makes several contacts with the 16S rRNA in the 70S ribosome. The polypeptide is Large ribosomal subunit protein uL2 (Caulobacter vibrioides (strain ATCC 19089 / CIP 103742 / CB 15) (Caulobacter crescentus)).